Here is an 84-residue protein sequence, read N- to C-terminus: Protein Ac76 (84 aa).

As to quaternary structure, interacts with protein Ac75.

The protein resides in the host cytoplasm. Its subcellular location is the host nucleus. In terms of biological role, plays an essential role in budded virion (BV) and occluded derived virion (ODV) development. Participates in intranuclear microvesicle formation, ODV envelopment, and subsequent embedding of virions into occlusion bodies. This Lepidoptera (butterflies and moths) protein is Protein Ac76 (Ac76).